A 147-amino-acid polypeptide reads, in one-letter code: MMKLNLFINAKETESYIDIHAPKMNDHVQSIINAVNDLDKSHTLVGYIDKEIHIINVSDVITFQVINKNVTAITSNQKFKLKLRLYELEKQLPQHFIRISKSEIVNKYYIEKLLLEPNGLIRMYLKDAHYTYSSRRYLKSIKERLSI.

The 104-residue stretch at 44–147 (LVGYIDKEIH…LKSIKERLSI (104 aa)) folds into the HTH LytTR-type domain.

It localises to the cytoplasm. This is an uncharacterized protein from Staphylococcus aureus (strain MW2).